Consider the following 505-residue polypeptide: MSTRTARSLGPDLVLAGTVAKRAEILVVGLTSGPDGPEIALSEGIVAEDVLAEILDSLIAVGATGKPEQLTRVPAPSALSVTSVLAVGLGSADKLDSEQIRKSAGAAARSLSGIDTVATTLSILDLGAAAEGFALGAYSFTEFKSSMTAPGPDSQPLARVELLVPSPRTKETKATLARSAAIAEAVATAREFVNTPPSHLYPAEFAARAKALGVEAGLTVQVLDEKALEKGGYGGIIGVGKGSSRQPRLVRLEYASKKRGARKVALVGKGITFDTGGISIKPAAGMENMTSDMGGAAAVISTVVLAAKLGLPVNVVAYVPMAENMPSATAQRPGDVLTQYGGITIEVVNTDAEGRLILADAMVRAGEDNPDYMIDTATLTGAQMVALGNRTPGVMGTDEFRDRVASISQSVGENGWAMPLPEELRGDLDSKVADMANVTPHRWGGMLVAAHYLKEFVPEGVQWAHIDVAGPAYNTSGPWGYTGKGGTGVPVRTMISVLEDIAVNG.

Mn(2+)-binding residues include Lys269 and Asp274. Lys281 is an active-site residue. Residues Asp292, Asp351, and Glu353 each contribute to the Mn(2+) site. Arg355 is a catalytic residue.

It belongs to the peptidase M17 family. The cofactor is Mn(2+).

It localises to the cytoplasm. It carries out the reaction Release of an N-terminal amino acid, Xaa-|-Yaa-, in which Xaa is preferably Leu, but may be other amino acids including Pro although not Arg or Lys, and Yaa may be Pro. Amino acid amides and methyl esters are also readily hydrolyzed, but rates on arylamides are exceedingly low.. The catalysed reaction is Release of an N-terminal amino acid, preferentially leucine, but not glutamic or aspartic acids.. Functionally, presumably involved in the processing and regular turnover of intracellular proteins. Catalyzes the removal of unsubstituted N-terminal amino acids from various peptides. The protein is Probable cytosol aminopeptidase of Rhodococcus erythropolis (strain PR4 / NBRC 100887).